Reading from the N-terminus, the 151-residue chain is Multiprotein-bridging factor 1 (151 aa).

A disordered region spans residues 1 to 32 (MSSDWDSVTIIGQKARVGGGGPRENVAKTSSQ). The 55-residue stretch at 86-140 (IQQARQEKKLTQKELATKVNEKPNVINDYEAGRAIPNQQLLAKLERALGVKLRGK) folds into the HTH cro/C1-type domain. Residues 97 to 116 (QKELATKVNEKPNVINDYEA) constitute a DNA-binding region (H-T-H motif).

The protein belongs to the MBF1 family.

Its function is as follows. Transcriptional coactivator that stimulates GCN4-dependent transcriptional activity by bridging the DNA-binding region of GCN4 and TBP (SPT15), thereby recruiting TBP to GCN4-bound promoters. Involved in induction of the ribosome quality control (RQC) pathway; a pathway that degrades nascent peptide chains during problematic translation. Required to prevent stalled ribosomes from frameshifting. This Candida albicans (strain SC5314 / ATCC MYA-2876) (Yeast) protein is Multiprotein-bridging factor 1 (MBF1).